A 489-amino-acid polypeptide reads, in one-letter code: GTPase Der (489 aa).

EngA-type G domains lie at 30–199 (PVVS…KDKP) and 227–403 (FRLA…SRSH). GTP-binding positions include 36–43 (GRQNVGKS), 85–89 (DTPGL), 151–154 (NKAD), 233–240 (GKPNSGKS), 280–284 (DTAGI), and 345–348 (NKWD). Positions 404–488 (RKVSTSELNK…PIRLEFRSDR (85 aa)) constitute a KH-like domain.

Belongs to the TRAFAC class TrmE-Era-EngA-EngB-Septin-like GTPase superfamily. EngA (Der) GTPase family. As to quaternary structure, associates with the 50S ribosomal subunit.

Functionally, GTPase that plays an essential role in the late steps of ribosome biogenesis. In Leptospira interrogans serogroup Icterohaemorrhagiae serovar copenhageni (strain Fiocruz L1-130), this protein is GTPase Der.